The primary structure comprises 241 residues: Thiamine import ATP-binding protein ThiQ (241 aa).

The region spanning 2–239 is the ABC transporter domain; it reads IQLDKLNHCY…PKDEVLIQYL (238 aa). 41–48 serves as a coordination point for ATP; sequence GPSGAGKS.

Belongs to the ABC transporter superfamily. Thiamine importer (TC 3.A.1.19.1) family. In terms of assembly, the complex is composed of two ATP-binding proteins (ThiQ), two transmembrane proteins (ThiP) and a solute-binding protein (ThiB).

It localises to the cell inner membrane. It carries out the reaction thiamine(out) + ATP + H2O = thiamine(in) + ADP + phosphate + H(+). Functionally, part of the ABC transporter complex ThiBPQ involved in thiamine import. Responsible for energy coupling to the transport system. This Photobacterium profundum (strain SS9) protein is Thiamine import ATP-binding protein ThiQ.